The following is a 250-amino-acid chain: 5'-nucleotidase SurE (250 aa).

4 residues coordinate a divalent metal cation: Asp8, Asp9, Ser39, and Asn91.

Belongs to the SurE nucleotidase family. It depends on a divalent metal cation as a cofactor.

The protein resides in the cytoplasm. It carries out the reaction a ribonucleoside 5'-phosphate + H2O = a ribonucleoside + phosphate. Its function is as follows. Nucleotidase that shows phosphatase activity on nucleoside 5'-monophosphates. The sequence is that of 5'-nucleotidase SurE from Leptospira borgpetersenii serovar Hardjo-bovis (strain JB197).